Consider the following 539-residue polypeptide: DNA damage-binding protein CMR1 (539 aa).

Residues 22–89 (LNLPTEAKKE…ALKQEDLGGS (68 aa)) are disordered. The span at 27–39 (EAKKESVDPEVAP) shows a compositional bias: basic and acidic residues. WD repeat units follow at residues 182–223 (VTKE…EPLQ), 226–268 (LHHA…DVLD), 316–356 (LGEK…TART), 377–415 (NSRL…LDML), 462–505 (GRWV…LAHL), and 508–539 (ALMT…YWWE).

Belongs to the WD repeat DDB2/WDR76 family.

Its function is as follows. DNA-binding protein that binds to both single- and double-stranded DNA. Binds preferentially to UV-damaged DNA. May be involved in DNA-metabolic processes. The sequence is that of DNA damage-binding protein CMR1 from Yarrowia lipolytica (strain CLIB 122 / E 150) (Yeast).